Here is a 464-residue protein sequence, read N- to C-terminus: MGNLLGGVSFREPTTVEDCDSTWQTDSEPEPEQPGPAGGGEGQQHDEPEQPKQPPERAGGRPRASPVPEDHAEAAGAEQGGESTEGNAKPKRSFYAARDLYKYRHQYPNFKDIRYQNDLSNLRFYKNKIPFKPDGVYIEEVLNKWKGDYEKLEHNHTYIQWLFPLREQGLNFYAKELTTYEIEEFKKTKEAIRRFLLAYKMMLEFFGIKLIDKTGNVARAGNWQERFQHLNESQHNYLRITRILKSLGELGYESFKSPLVKFILHEALVENTIPNIKQSALEYFVYTIRDRRERRKLLRFAQKHYTPSENFIWGPPKKELPERSKAQKTPTLPASGSNGQTSTHKKSKDSKISPGASHVNSKSVEEKKGASREPGEEADKPSPEPGSGDPKPRNTEKDSAADQSDSPPEKTVPDTAGKGECPTSSEKDGEGEDQSKDSENPENAGCHAEVVAQQNATNPQTSSG.

Disordered stretches follow at residues 1-91 (MGNL…AKPK) and 309-464 (ENFI…TSSG). Basic and acidic residues predominate over residues 43–59 (QQHDEPEQPKQPPERAG). Residues 74–86 (AAGAEQGGESTEG) are compositionally biased toward low complexity. The segment covering 316-325 (PKKELPERSK) has biased composition (basic and acidic residues). The span at 327-342 (QKTPTLPASGSNGQTS) shows a compositional bias: polar residues. Composition is skewed to basic and acidic residues over residues 363-382 (SVEE…DKPS), 390-400 (PKPRNTEKDSA), and 425-439 (SEKD…KDSE). A compositionally biased stretch (polar residues) spans 452-464 (AQQNATNPQTSSG).

It belongs to the opioid growth factor receptor family.

This Mus musculus (Mouse) protein is Opioid growth factor receptor-like protein 1 (Ogfrl1).